A 505-amino-acid polypeptide reads, in one-letter code: MHTAKPVKRYFNLKSSRIGMNPQTKTFEGAINRLNSLQSNAKVLEVLRKRGKIPNDQSMVEMRHWLRCIGYQPSDLNRLNVIHVAGTKGKGSTCAFTSSILQQIQKSGERSIPKCIGMYTSPHLRSVCERIQLNGKPISQELFTKYFFDVWERLENAVGSDSEKPMYFRFLTLMAWHVFISENVDAAIIEVGIGGEYDSTNLIEKPYATAVTSLGLDHTSLLGNTIAEIAWQKAGIYKESAIALTCEQAPEAMNVLKNRAAERNTSLKVVIPPAELTPDMIGLSGVHQLGNTSLAVSLVQEFYEKAGCPFDRDPYQDPAILDGLKYVKWPGRCQIEEINNIKWCFDGAHTKESLEATGLWLASKKNLYEDADARILLFNQQSRDDPIALLRSFLKGLESSGTGISFTHVIFSTNVTWKDAGYNPELLSINTITDNKPVLHVQEDLCKWWKESKGTTSEATVAPTIQEAIETVMSIKQKSRNTFVCVTGSLHLTGGVFVVLDQAVF.

89–92 provides a ligand contact to ATP; sequence GKGS. Mg(2+) contacts are provided by S121, E190, and H218. 2 residues coordinate ATP: R332 and D346.

Belongs to the folylpolyglutamate synthase family. It depends on a monovalent cation as a cofactor.

The protein localises to the mitochondrion inner membrane. It is found in the mitochondrion matrix. It localises to the cytoplasm. It catalyses the reaction (6S)-5,6,7,8-tetrahydrofolyl-(gamma-L-Glu)(n) + L-glutamate + ATP = (6S)-5,6,7,8-tetrahydrofolyl-(gamma-L-Glu)(n+1) + ADP + phosphate + H(+). It functions in the pathway cofactor biosynthesis; tetrahydrofolylpolyglutamate biosynthesis. Catalyzes conversion of folates to polyglutamate derivatives allowing concentration of folate compounds in the cell and the intracellular retention of these cofactors, which are important substrates for most of the folate-dependent enzymes that are involved in one-carbon transfer reactions involved in purine, pyrimidine and amino acid synthesis. The protein is Probable folylpolyglutamate synthase (met7) of Schizosaccharomyces pombe (strain 972 / ATCC 24843) (Fission yeast).